Consider the following 882-residue polypeptide: Cutinase transcription factor 1 beta (882 aa).

The segment covering 1-20 (MNAETPEGSAAPPSPASTSA) has biased composition (low complexity). Residues 1–49 (MNAETPEGSAAPPSPASTSAKTVTDKTNKKRASPSGDSEQPTKVTKRRA) form a disordered region. Positions 53–81 (CVSCRARKVRCDVVEGAPCGNCRWDNVEC) form a DNA-binding region, zn(2)-C6 fungal-type. The disordered stretch occupies residues 117 to 148 (NPMGMSTADLRRPSSGSAISTSSIDGPSSFLS). Low complexity predominate over residues 130 to 139 (SSGSAISTSS).

The protein localises to the nucleus. This is Cutinase transcription factor 1 beta (CTF1-BETA) from Fusarium vanettenii (Neocosmospora pisi).